The following is a 201-amino-acid chain: Lipopolysaccharide core heptose(II)-phosphate phosphatase (201 aa).

A signal peptide spans 1 to 35; it reads MLAFTLRFIKNKRYLATLAGALVIIAGLTSQHAWS.

This sequence belongs to the phosphoglycerate mutase family. Ais subfamily.

The protein localises to the periplasm. Its pathway is bacterial outer membrane biogenesis; lipopolysaccharide metabolism. Its function is as follows. Catalyzes the dephosphorylation of heptose(II) of the outer membrane lipopolysaccharide core. The protein is Lipopolysaccharide core heptose(II)-phosphate phosphatase of Salmonella choleraesuis (strain SC-B67).